Consider the following 396-residue polypeptide: Elongation factor Tu (396 aa).

The tr-type G domain maps to 10–206; it reads KPHVNVGTIG…ALDTYIPTPE (197 aa). A G1 region spans residues 19 to 26; the sequence is GHVDHGKT. 19–26 contributes to the GTP binding site; sequence GHVDHGKT. Mg(2+) is bound at residue Thr-26. Positions 60 to 64 are G2; sequence GITIN. The G3 stretch occupies residues 81 to 84; that stretch reads DCPG. GTP contacts are provided by residues 81–85 and 136–139; these read DCPGH and NKCD. Residues 136–139 form a G4 region; it reads NKCD. The segment at 174–176 is G5; the sequence is SAK.

Belongs to the TRAFAC class translation factor GTPase superfamily. Classic translation factor GTPase family. EF-Tu/EF-1A subfamily. As to quaternary structure, monomer.

Its subcellular location is the cytoplasm. It carries out the reaction GTP + H2O = GDP + phosphate + H(+). GTP hydrolase that promotes the GTP-dependent binding of aminoacyl-tRNA to the A-site of ribosomes during protein biosynthesis. This chain is Elongation factor Tu, found in Thiomonas delicata (Thiomonas cuprina).